We begin with the raw amino-acid sequence, 367 residues long: Lipoyl synthase 2, chloroplastic (367 aa).

[4Fe-4S] cluster is bound by residues Cys84, Cys89, Cys95, Cys121, Cys125, Cys128, and Ser336. The 222-residue stretch at Gly104–Arg325 folds into the Radical SAM core domain.

The protein belongs to the radical SAM superfamily. Lipoyl synthase family. The cofactor is [4Fe-4S] cluster.

It is found in the plastid. The protein localises to the chloroplast. The catalysed reaction is [[Fe-S] cluster scaffold protein carrying a second [4Fe-4S](2+) cluster] + N(6)-octanoyl-L-lysyl-[protein] + 2 oxidized [2Fe-2S]-[ferredoxin] + 2 S-adenosyl-L-methionine + 4 H(+) = [[Fe-S] cluster scaffold protein] + N(6)-[(R)-dihydrolipoyl]-L-lysyl-[protein] + 4 Fe(3+) + 2 hydrogen sulfide + 2 5'-deoxyadenosine + 2 L-methionine + 2 reduced [2Fe-2S]-[ferredoxin]. It functions in the pathway protein modification; protein lipoylation via endogenous pathway; protein N(6)-(lipoyl)lysine from octanoyl-[acyl-carrier-protein]: step 2/2. In terms of biological role, catalyzes the radical-mediated insertion of two sulfur atoms into the C-6 and C-8 positions of the octanoyl moiety bound to the lipoyl domains of lipoate-dependent enzymes, thereby converting the octanoylated domains into lipoylated derivatives. The polypeptide is Lipoyl synthase 2, chloroplastic (Zea mays (Maize)).